The sequence spans 377 residues: GDSL esterase/lipase 4 (377 aa).

A signal peptide spans 1–21 (MASPRFNSIIIILFICTISLS). The active-site Nucleophile is S44. N-linked (GlcNAc...) asparagine glycans are attached at residues N135, N188, N194, N207, and N241. Residues D342 and H345 contribute to the active site. N-linked (GlcNAc...) asparagine glycosylation occurs at N364.

Belongs to the 'GDSL' lipolytic enzyme family.

It is found in the secreted. The chain is GDSL esterase/lipase 4 (GLIP4) from Arabidopsis thaliana (Mouse-ear cress).